Reading from the N-terminus, the 220-residue chain is Protein DGCR6L (220 aa).

Residues 76–159 are a coiled coil; it reads KSLYNQRLRL…ADQQSTLEKA (84 aa).

It belongs to the gonadal family. In terms of tissue distribution, widely expressed in fetal and adult tissues. Highest expression in liver, heart and skeletal muscle. Lower levels in pancreas and placenta. Weak expression in brain.

The protein localises to the nucleus. Functionally, may play a role in neural crest cell migration into the third and fourth pharyngeal pouches. This chain is Protein DGCR6L (DGCR6L), found in Homo sapiens (Human).